A 242-amino-acid polypeptide reads, in one-letter code: Dehydration-responsive element-binding protein 1J (242 aa).

Over residues 20-29 (SSATTAATAT) the composition is skewed to low complexity. Positions 20–44 (SSATTAATATGPASPKRPAGRTKFQ) are disordered. Positions 50–109 (VFRGVRRRGRAGRWVCEVRVPGSRGDRLWVGTFDTAEEAARAHDAAMLALCGASASLNFA) form a DNA-binding region, AP2/ERF. Positions 143-184 (FQRRGSTAATATATSGDAASTAPPSSSPVLSPNDDNASSAST) are disordered. The segment covering 148-184 (STAATATATSGDAASTAPPSSSPVLSPNDDNASSAST) has biased composition (low complexity).

Belongs to the AP2/ERF transcription factor family. ERF subfamily.

Its subcellular location is the nucleus. Its function is as follows. Transcriptional activator that binds specifically to the DNA sequence 5'-[AG]CCGAC-3'. Binding to the C-repeat/DRE element mediates high salinity- and dehydration-inducible transcription. This is Dehydration-responsive element-binding protein 1J (DREB1J) from Oryza sativa subsp. japonica (Rice).